We begin with the raw amino-acid sequence, 151 residues long: Small ribosomal subunit protein uS15 (151 aa).

This sequence belongs to the universal ribosomal protein uS15 family. As to quaternary structure, component of the small ribosomal subunit. Mature ribosomes consist of a small (40S) and a large (60S) subunit. The 40S subunit contains about 32 different proteins and 1 molecule of RNA (18S). The 60S subunit contains 45 different proteins and 3 molecules of RNA (25S, 5.8S and 5S).

It is found in the cytoplasm. Functionally, component of the ribosome, a large ribonucleoprotein complex responsible for the synthesis of proteins in the cell. The small ribosomal subunit (SSU) binds messenger RNAs (mRNAs) and translates the encoded message by selecting cognate aminoacyl-transfer RNA (tRNA) molecules. The large subunit (LSU) contains the ribosomal catalytic site termed the peptidyl transferase center (PTC), which catalyzes the formation of peptide bonds, thereby polymerizing the amino acids delivered by tRNAs into a polypeptide chain. The nascent polypeptides leave the ribosome through a tunnel in the LSU and interact with protein factors that function in enzymatic processing, targeting, and the membrane insertion of nascent chains at the exit of the ribosomal tunnel. This is Small ribosomal subunit protein uS15 (RPS13) from Candida albicans (strain SC5314 / ATCC MYA-2876) (Yeast).